Reading from the N-terminus, the 305-residue chain is MVDKLTHLKQLEAESIHIIREVAAEFDNPVMLYSIGKDSAVMLHLARKAFFPGKLPFPVMHVDTRWKFQEMYRFRDRMVEEMGLDLITHVNPDGVAQGINPFTHGSAKHTDVMKTEGLKQALDKYGFDAAFGGARRDEEKSRAKERVYSFRDSKHRWDPKNQRPELWNIYNGKVKKGESIRVFPLSNWTELDIWQYIYLEGIPIVPLYFAAEREVIEKNGTLIMIDDERILEHLSDEEKARIEKRMVRFRTLGCYPLTGAVESSATTLPEIIQEMLLTRTSERQGRVIDHDQAGSMEEKKRQGYF.

This sequence belongs to the PAPS reductase family. CysD subfamily. Heterodimer composed of CysD, the smaller subunit, and CysN.

The enzyme catalyses sulfate + ATP + H(+) = adenosine 5'-phosphosulfate + diphosphate. It functions in the pathway sulfur metabolism; hydrogen sulfide biosynthesis; sulfite from sulfate: step 1/3. Its function is as follows. With CysN forms the ATP sulfurylase (ATPS) that catalyzes the adenylation of sulfate producing adenosine 5'-phosphosulfate (APS) and diphosphate, the first enzymatic step in sulfur assimilation pathway. APS synthesis involves the formation of a high-energy phosphoric-sulfuric acid anhydride bond driven by GTP hydrolysis by CysN coupled to ATP hydrolysis by CysD. In Pseudomonas aeruginosa (strain LESB58), this protein is Sulfate adenylyltransferase subunit 2.